The sequence spans 423 residues: Serine hydroxymethyltransferase (423 aa).

(6S)-5,6,7,8-tetrahydrofolate contacts are provided by residues Leu-120 and 124 to 126 (GHL). An N6-(pyridoxal phosphate)lysine modification is found at Lys-229. (6S)-5,6,7,8-tetrahydrofolate-binding positions include Glu-245 and 353–355 (SPF).

The protein belongs to the SHMT family. In terms of assembly, homodimer. Pyridoxal 5'-phosphate is required as a cofactor.

Its subcellular location is the cytoplasm. It carries out the reaction (6R)-5,10-methylene-5,6,7,8-tetrahydrofolate + glycine + H2O = (6S)-5,6,7,8-tetrahydrofolate + L-serine. It participates in one-carbon metabolism; tetrahydrofolate interconversion. Its pathway is amino-acid biosynthesis; glycine biosynthesis; glycine from L-serine: step 1/1. In terms of biological role, catalyzes the reversible interconversion of serine and glycine with tetrahydrofolate (THF) serving as the one-carbon carrier. This reaction serves as the major source of one-carbon groups required for the biosynthesis of purines, thymidylate, methionine, and other important biomolecules. Also exhibits THF-independent aldolase activity toward beta-hydroxyamino acids, producing glycine and aldehydes, via a retro-aldol mechanism. In Prochlorococcus marinus (strain MIT 9312), this protein is Serine hydroxymethyltransferase.